Consider the following 195-residue polypeptide: 3-isopropylmalate dehydratase small subunit (195 aa).

The protein belongs to the LeuD family. LeuD type 1 subfamily. As to quaternary structure, heterodimer of LeuC and LeuD.

The enzyme catalyses (2R,3S)-3-isopropylmalate = (2S)-2-isopropylmalate. It participates in amino-acid biosynthesis; L-leucine biosynthesis; L-leucine from 3-methyl-2-oxobutanoate: step 2/4. Functionally, catalyzes the isomerization between 2-isopropylmalate and 3-isopropylmalate, via the formation of 2-isopropylmaleate. This chain is 3-isopropylmalate dehydratase small subunit, found in Frankia casuarinae (strain DSM 45818 / CECT 9043 / HFP020203 / CcI3).